The primary structure comprises 430 residues: RNA pseudouridine synthase 2, chloroplastic (430 aa).

The transit peptide at 1 to 43 (MLSISQLPSFSLTTAKSLRYPSSPSSSLSIFFSFFPKVSNFVR) directs the protein to the chloroplast. The 74-residue stretch at 82-155 (IRLDSWISSR…IPLDIVYEDK (74 aa)) folds into the S4 RNA-binding domain. The segment at 195–222 (SNSEEDDDSDEETFSDDEEMTTSPSSYA) is disordered. The segment covering 196-214 (NSEEDDDSDEETFSDDEEM) has biased composition (acidic residues). Asp234 is a catalytic residue.

This sequence belongs to the pseudouridine synthase RluA family.

It is found in the plastid. The protein localises to the chloroplast. It carries out the reaction a uridine in RNA = a pseudouridine in RNA. This is RNA pseudouridine synthase 2, chloroplastic from Arabidopsis thaliana (Mouse-ear cress).